The chain runs to 800 residues: Phenylalanine--tRNA ligase beta subunit (800 aa).

Residues 38-147 enclose the tRNA-binding domain; it reads GAELKGVVAA…PGTVPGTPIG (110 aa). Residues 401-477 form the B5 domain; sequence VASPEVRMRW…RTLGYDAIPE (77 aa). The Mg(2+) site is built by Asp455, Asp461, Glu464, and Glu465. Residues 708–799 form the FDX-ACB domain; the sequence is PRLPAVLRDV…LRERVGAELR (92 aa).

Belongs to the phenylalanyl-tRNA synthetase beta subunit family. Type 1 subfamily. As to quaternary structure, tetramer of two alpha and two beta subunits. It depends on Mg(2+) as a cofactor.

The protein localises to the cytoplasm. The catalysed reaction is tRNA(Phe) + L-phenylalanine + ATP = L-phenylalanyl-tRNA(Phe) + AMP + diphosphate + H(+). The protein is Phenylalanine--tRNA ligase beta subunit of Anaeromyxobacter dehalogenans (strain 2CP-C).